Consider the following 391-residue polypeptide: Leucine-rich repeat-containing protein 74B (391 aa).

Residues 1 to 38 form a disordered region; the sequence is MKGPCEVQKNEDQEGEAAATGPQAETLEAERSWTADSH. Residues 28–38 are compositionally biased toward basic and acidic residues; the sequence is EAERSWTADSH. LRR repeat units follow at residues 106-126, 134-154, 162-182, 190-211, 218-239, 246-259, 274-294, 302-323, and 332-354; these read YIKRLDLRDNGLCGAGAEALA, IISDVDLSENQIGAAGLQAIC, TVEKMQLQGNRLEEQAAQHLA, GLKSLDLSYNQLNDLAGEILGP, GLTELNLSWNHLRGLGATAFAR, FLKVLDISHNGFGD, VLEELNMRNNRISVSGALKLG, TLRILIISKNPIRSDGCVGLLK, and ALELLDVSDIQVSRECEDLASSM. Residues 371–391 are disordered; sequence KDWPQASTPSQPASAPSDSGL. Over residues 374-391 the composition is skewed to low complexity; sequence PQASTPSQPASAPSDSGL.

This is Leucine-rich repeat-containing protein 74B from Mus musculus (Mouse).